Consider the following 85-residue polypeptide: Putative membrane protein insertion efficiency factor (85 aa).

This sequence belongs to the UPF0161 family.

The protein localises to the cell inner membrane. In terms of biological role, could be involved in insertion of integral membrane proteins into the membrane. This is Putative membrane protein insertion efficiency factor from Dictyoglomus thermophilum (strain ATCC 35947 / DSM 3960 / H-6-12).